A 219-amino-acid polypeptide reads, in one-letter code: UPF0619 GPI-anchored membrane protein AFUA_3G00880 (219 aa).

The N-terminal stretch at 1–16 is a signal peptide; the sequence is MRFALTLTAFVGSVAA. Asn-85 is a glycosylation site (N-linked (GlcNAc...) asparagine). Disordered stretches follow at residues 107-144 and 160-205; these read SQQF…GTVS and SSTL…SLTV. The span at 114–144 shows a compositional bias: low complexity; that stretch reads SSGSSTTSDSTSSASATGSASTSSSSTGTVS. The GPI-like-anchor amidated asparagine moiety is linked to residue Asn-198. Residues 199-219 constitute a propeptide, removed in mature form; the sequence is GAGSLTVPAGSLLLGLVALAL.

This sequence belongs to the UPF0619 family. In terms of processing, the GPI-like anchor contains a phosphoceramide lipid group. The anchor position has not been determined.

Its subcellular location is the cell membrane. The polypeptide is UPF0619 GPI-anchored membrane protein AFUA_3G00880 (Aspergillus fumigatus (strain ATCC MYA-4609 / CBS 101355 / FGSC A1100 / Af293) (Neosartorya fumigata)).